The primary structure comprises 685 residues: Amino acid transporter heavy chain SLC3A1 (685 aa).

Positions Met-1–Pro-10 are enriched in basic and acidic residues. The interval Met-1 to Pro-53 is disordered. Topologically, residues Met-1–Leu-88 are cytoplasmic. Residues Phe-89–Ile-109 form a helical; Signal-anchor for type II membrane protein membrane-spanning segment. The Extracellular portion of the chain corresponds to Ser-110 to Cys-685. Asn-213 is a Ca(2+) binding site. N-linked (GlcNAc...) asparagine glycosylation is found at Asn-213, Asn-240, and Asn-260. Cys-241 and Cys-272 are disulfide-bonded. Residues Asp-283, Phe-317, Leu-318, and Glu-320 each contribute to the Ca(2+) site. N-linked (GlcNAc...) asparagine glycosylation occurs at Asn-331. Phosphoserine is present on Ser-385. N-linked (GlcNAc...) asparagine glycans are attached at residues Asn-512 and Asn-522. Intrachain disulfides connect Cys-570–Cys-666 and Cys-673–Cys-685.

Disulfide-linked heterodimer composed of the catalytic light subunit SLC7A9 and the heavy subunit SLC3A1. The heterodimer is the minimal functional unit. Assembles in non-covalently linked heterotetramers (dimers of heterodimers) and higher order oligomers; the oligomerization is mediated by SLC3A1 likely to prevent degradation in the endoplasmic reticulum and facilitate heteromer trafficking to the plasma membrane. Disulfide-linked heterodimer composed of the catalytic light subunit SLC7A13 and the heavy subunit SLC3A1. As to expression, expressed in the brush border membrane in the kidney (at protein level). Highly expressed in renal tubules in the outer stripe of the outer medulla and medullary ray (at protein level). Also detected in the renal cortex. More abundant in male than female kidneys.

The protein resides in the cell membrane. The protein localises to the apical cell membrane. In terms of biological role, acts as a chaperone that facilitates biogenesis and trafficking of functional transporter heteromers to the plasma membrane. Associates with SLC7A9 to form a functional transporter complex that mediates the electrogenic exchange between cationic amino acids and neutral amino acids, with a stoichiometry of 1:1. SLC7A9-SLC3A1 transporter has system b(0,+)-like activity with high affinity for extracellular cationic amino acids and L-cystine and lower affinity for intracellular neutral amino acids. Substrate exchange is driven by high concentration of intracellular neutral amino acids and the intracellular reduction of L-cystine to L-cysteine. SLC7A9-SLC3A1 acts as a major transporter for reabsorption of L-cystine and dibasic amino acids across the brush border membrane in early proximal tubules. Associates with SLC7A13 to form a functional complex that transports anionic and neutral amino acids via exchange or facilitated diffusion. SLC7A13-SLC3A1 may act as a major transporter for L-cystine in late proximal tubules, ensuring its reabsorption from the luminal fluid in exchange for cytosolic L-glutamate or L-aspartate. The sequence is that of Amino acid transporter heavy chain SLC3A1 from Mus musculus (Mouse).